Reading from the N-terminus, the 875-residue chain is Alanine--tRNA ligase (875 aa).

4 residues coordinate Zn(2+): histidine 564, histidine 568, cysteine 666, and histidine 670.

This sequence belongs to the class-II aminoacyl-tRNA synthetase family. In terms of assembly, homotetramer. Requires Zn(2+) as cofactor.

The protein resides in the cytoplasm. It catalyses the reaction tRNA(Ala) + L-alanine + ATP = L-alanyl-tRNA(Ala) + AMP + diphosphate. Catalyzes the attachment of alanine to tRNA(Ala) in a two-step reaction: alanine is first activated by ATP to form Ala-AMP and then transferred to the acceptor end of tRNA(Ala). Also edits incorrectly charged Ser-tRNA(Ala) and Gly-tRNA(Ala) via its editing domain. The protein is Alanine--tRNA ligase of Yersinia pseudotuberculosis serotype IB (strain PB1/+).